Here is a 398-residue protein sequence, read N- to C-terminus: Fe-regulated protein 8 (398 aa).

In terms of biological role, protein of unknown function; part of the gene cluster that mediates the biosynthesis of siderophore ferrichrome A which is contributing to organismal virulence. This chain is Fe-regulated protein 8, found in Mycosarcoma maydis (Corn smut fungus).